The sequence spans 76 residues: Tautomerase PptA (76 aa).

The active-site Proton acceptor; via imino nitrogen is proline 2.

The protein belongs to the 4-oxalocrotonate tautomerase family. PptA subfamily. Homodimer.

The protein resides in the cytoplasm. The polypeptide is Tautomerase PptA (Cronobacter sakazakii (strain ATCC BAA-894) (Enterobacter sakazakii)).